The chain runs to 279 residues: HTH-type transcriptional regulator HdfR (279 aa).

Positions 1-58 constitute an HTH lysR-type domain; it reads MDTELLKTFLEVSRTRHFGRAAESLYLTQSAVSFRIRQLENQLGVNLFTRHRNNIRLT. Positions 18–37 form a DNA-binding region, H-T-H motif; sequence FGRAAESLYLTQSAVSFRIR.

Belongs to the LysR transcriptional regulatory family.

Its function is as follows. Negatively regulates the transcription of the flagellar master operon flhDC by binding to the upstream region of the operon. The polypeptide is HTH-type transcriptional regulator HdfR (Shigella boydii serotype 18 (strain CDC 3083-94 / BS512)).